We begin with the raw amino-acid sequence, 221 residues long: UPF0502 protein PA14_19450 (221 aa).

It belongs to the UPF0502 family.

This chain is UPF0502 protein PA14_19450, found in Pseudomonas aeruginosa (strain UCBPP-PA14).